Reading from the N-terminus, the 591-residue chain is V-type ATP synthase alpha chain (591 aa).

233-240 (GPFGAGKT) lines the ATP pocket.

It belongs to the ATPase alpha/beta chains family.

It catalyses the reaction ATP + H2O + 4 H(+)(in) = ADP + phosphate + 5 H(+)(out). Its function is as follows. Produces ATP from ADP in the presence of a proton gradient across the membrane. The V-type alpha chain is a catalytic subunit. The protein is V-type ATP synthase alpha chain of Streptococcus pyogenes serotype M18 (strain MGAS8232).